The primary structure comprises 128 residues: UPF0325 protein KPN78578_01770 (128 aa).

It belongs to the UPF0325 family.

This Klebsiella pneumoniae subsp. pneumoniae (strain ATCC 700721 / MGH 78578) protein is UPF0325 protein KPN78578_01770.